The chain runs to 338 residues: Heat-inducible transcription repressor HrcA (338 aa).

The protein belongs to the HrcA family.

Functionally, negative regulator of class I heat shock genes (grpE-dnaK-dnaJ and groELS operons). Prevents heat-shock induction of these operons. The sequence is that of Heat-inducible transcription repressor HrcA from Thermotoga maritima (strain ATCC 43589 / DSM 3109 / JCM 10099 / NBRC 100826 / MSB8).